Consider the following 88-residue polypeptide: Large ribosomal subunit protein bL27 (88 aa).

Residues 1-21 (MAHKKGASSSRNGRDSNAQRL) form a disordered region. The segment covering 7–19 (ASSSRNGRDSNAQ) has biased composition (polar residues).

It belongs to the bacterial ribosomal protein bL27 family.

This chain is Large ribosomal subunit protein bL27, found in Frankia casuarinae (strain DSM 45818 / CECT 9043 / HFP020203 / CcI3).